The primary structure comprises 222 residues: Ras-related protein Rab-21 (222 aa).

At alanine 2 the chain carries N-acetylalanine. 10 residues coordinate GTP: glycine 25, glycine 28, lysine 29, threonine 30, serine 31, asparagine 42, aspartate 43, histidine 45, threonine 47, and threonine 48. Residue threonine 30 coordinates Mg(2+). A Switch 1 motif is present at residues 40 to 53 (KFNDKHITTLQASF). Positions 48 and 71 each coordinate Mg(2+). A Switch 2 motif is present at residues 73–91 (AGQERFHALGPIYYRDSNG). Positions 74, 129, 130, 132, 160, and 161 each coordinate GTP. 2 S-geranylgeranyl cysteine lipidation sites follow: cysteine 218 and cysteine 219. Residue cysteine 219 is modified to Cysteine methyl ester. The propeptide at 220–222 (SSG) is removed in mature form.

The protein belongs to the small GTPase superfamily. Rab family. As to quaternary structure, interacts with the cytoplasmic tail of integrins ITGA1, ITGA2, ITGA5, ITGA6, ITGA11 and ITGB1; this interaction is dependent upon its GDP/GTP cycle. Interacts with RABGEF1 (via VPS9 domain). Interacts with ANKRD27. Interacts (in GTP-bound form) with VAMP8 in response to starvation; the interaction probably regulates VAMP8 endolysosomal trafficking. Interacts (active GTP-bound form) with TMED10; the interaction is indirect and regulates TMED10 abundance and localization at the Golgi. The cofactor is Mg(2+).

The protein resides in the endoplasmic reticulum membrane. The protein localises to the golgi apparatus. It is found in the trans-Golgi network. It localises to the golgi apparatus membrane. Its subcellular location is the early endosome membrane. The protein resides in the cytoplasmic vesicle membrane. The protein localises to the cleavage furrow. It is found in the cell projection. It localises to the neuron projection. It carries out the reaction GTP + H2O = GDP + phosphate + H(+). Regulated by guanine nucleotide exchange factors (GEFs) including ANKRD27 and RABGEF1, which promote the exchange of bound GDP for free GTP. Regulated by GTPase activating proteins (GAPs) which increase the GTP hydrolysis activity. Inhibited by GDP dissociation inhibitors (GDIs). In terms of biological role, the small GTPases Rab are key regulators of intracellular membrane trafficking, from the formation of transport vesicles to their fusion with membranes. Rabs cycle between an inactive GDP-bound form and an active GTP-bound form that is able to recruit to membranes different sets of downstream effectors directly responsible for vesicle formation, movement, tethering and fusion. RAB21 is involved in membrane trafficking control. Regulates integrin internalization and recycling, but does not influence the traffic of endosomally translocated receptors in general. As a result, may regulate cell adhesion and migration. During the mitosis of adherent cells, controls the endosomal trafficking of integrins which is required for the successful completion of cytokinesis. Involved in neurite growth. Following SBF2/MTMT13-mediated activation in response to starvation-induced autophagy, binds to and regulates SNARE protein VAMP8 endolysosomal transport required for SNARE-mediated autophagosome-lysosome fusion. Modulates protein levels of the cargo receptors TMED2 and TMED10, and required for appropriate Golgi localization of TMED10. This chain is Ras-related protein Rab-21 (RAB21), found in Bos taurus (Bovine).